Reading from the N-terminus, the 103-residue chain is N(4)-acetylcytidine amidohydrolase (103 aa).

In terms of domain architecture, ASCH spans 6-101; that stretch reads ITFFQRFQDD…QTQFYVIEFK (96 aa). The active-site Proton acceptor is the lysine 21. Threonine 24 acts as the Nucleophile in catalysis. Glutamate 74 functions as the Proton donor in the catalytic mechanism.

This sequence belongs to the N(4)-acetylcytidine amidohydrolase family.

It catalyses the reaction N(4)-acetylcytidine + H2O = cytidine + acetate + H(+). The enzyme catalyses N(4)-acetyl-2'-deoxycytidine + H2O = 2'-deoxycytidine + acetate + H(+). It carries out the reaction N(4)-acetylcytosine + H2O = cytosine + acetate + H(+). In terms of biological role, catalyzes the hydrolysis of N(4)-acetylcytidine (ac4C). The protein is N(4)-acetylcytidine amidohydrolase (yqfB) of Escherichia coli O127:H6 (strain E2348/69 / EPEC).